A 379-amino-acid chain; its full sequence is Actin, cytoplasmic (379 aa).

The protein belongs to the actin family.

The protein resides in the cytoplasm. It localises to the cytoskeleton. It catalyses the reaction ATP + H2O = ADP + phosphate + H(+). In terms of biological role, actins are highly conserved proteins that are involved in various types of cell motility and are ubiquitously expressed in all eukaryotic cells. In Euplotes crassus, this protein is Actin, cytoplasmic.